The primary structure comprises 623 residues: Prothrombin (623 aa).

The N-terminal stretch at 1–24 (MAHVGGLWLHGCLALAVLVSLVHS) is a signal peptide. The propeptide occupies 25-43 (QHVFMAPQQALSLLQRARR). Residues 44 to 90 (ANSGFFEEMRKGNLERECVEEQCSREEAYEALESPSETDAFWAKYTA) enclose the Gla domain. Residues Glu50, Glu51, Glu58, Glu60, Glu63, Glu64, Glu69, Glu70, Glu73, and Glu76 each carry the 4-carboxyglutamate modification. A disulfide bridge connects residues Cys61 and Cys66. Intrachain disulfides connect Cys91–Cys104, Cys109–Cys187, Cys130–Cys170, Cys158–Cys182, Cys214–Cys292, Cys235–Cys275, Cys263–Cys287, Cys337–Cys483, Cys392–Cys408, Cys537–Cys551, and Cys565–Cys595. 2 consecutive Kringle domains span residues 108–187 (NCAE…IPVC) and 213–292 (TCVP…LDYC). Residues Asn120 and Asn144 are each glycosylated (N-linked (GlcNAc...) asparagine). Positions 365 to 619 (IVEGSDAEIG…LKKWMQKVID (255 aa)) constitute a Peptidase S1 domain. The active-site Charge relay system is His407. Residue Asn417 is glycosylated (N-linked (GlcNAc...) asparagine). The active-site Charge relay system is Asp463. The tract at residues 552–574 (AGYKPDEGKRGDACEGDSGGPFV) is high affinity receptor-binding region which is also known as the TP508 peptide. Residue Ser569 is the Charge relay system of the active site.

Belongs to the peptidase S1 family. In terms of assembly, heterodimer (named alpha-thrombin) of a light and a heavy chain; disulfide-linked. Forms a heterodimer with SERPINA5. In plasma, interacts (via N-terminus) with alpha-1-microglobulin; this interaction does not prevent the activation of prothrombin to thrombin. Post-translationally, the gamma-carboxyglutamyl residues, which bind calcium ions, result from the carboxylation of glutamyl residues by a microsomal enzyme, the vitamin K-dependent carboxylase. The modified residues are necessary for the calcium-dependent interaction with a negatively charged phospholipid surface, which is essential for the conversion of prothrombin to thrombin. In terms of processing, in the penultimate step of the coagulation cascade, prothrombin is converted to thrombin by the prothrombinase complex composed of factor Xa (F10), cofactor Va (F5), and phospholipids. This activation requires factor Xa-catalyzed sequential cleavage at 2 sites, Arg-315 and Arg-364, along 2 possible pathways. In the first pathway, the first cleavage occurs at Arg-315, leading to the formation of the inactive intermediate prethrombin-2. This pathway preferentially occurs on platelets and in the absence of cofactor Va. In the second pathway, the first cleavage occurs at Arg-364, which separates protease domain into 2 chains that remain connected through a disulfide bond and generates the active intermediate meizothrombin. The presence of cofactor Va directs activation along the meizothrombin pathway and greatly accelerates the rate of cleavage at Arg-364, but has a smaller effect on the cleavage of meizothrombin at Arg-315. Meizothrombin accumulates as an intermediate when prothrombinase is assembled on the membrane of red blood cells.

The enzyme catalyses Selective cleavage of Arg-|-Gly bonds in fibrinogen to form fibrin and release fibrinopeptides A and B.. With respect to regulation, activity is promoted in the presence of negatively charged surfaces, such as polyphosphate and dextran sulfate. Inhibited by SERPINA5. Functionally, thrombin, which cleaves bonds after Arg and Lys, converts fibrinogen to fibrin and activates factors V, VII, VIII, XIII, and, in complex with thrombomodulin, protein C. Functions in blood homeostasis, inflammation and wound healing. Activates coagulation factor XI (F11); activation is promoted by the contact with negatively charged surfaces. Triggers the production of pro-inflammatory cytokines, such as MCP-1/CCL2 and IL8/CXCL8, in endothelial cells. The chain is Prothrombin (F2) from Sus scrofa (Pig).